Here is a 508-residue protein sequence, read N- to C-terminus: Lysine--tRNA ligase (508 aa).

Residues glutamate 418 and glutamate 425 each coordinate Mg(2+).

It belongs to the class-II aminoacyl-tRNA synthetase family. As to quaternary structure, homodimer. Requires Mg(2+) as cofactor.

The protein resides in the cytoplasm. The catalysed reaction is tRNA(Lys) + L-lysine + ATP = L-lysyl-tRNA(Lys) + AMP + diphosphate. In Burkholderia pseudomallei (strain 668), this protein is Lysine--tRNA ligase.